Consider the following 380-residue polypeptide: Glucose-1-phosphate adenylyltransferase (380 aa).

Residues Gly164, 179 to 180, and Ser190 contribute to the alpha-D-glucose 1-phosphate site; that span reads EK.

This sequence belongs to the bacterial/plant glucose-1-phosphate adenylyltransferase family. As to quaternary structure, homotetramer.

It carries out the reaction alpha-D-glucose 1-phosphate + ATP + H(+) = ADP-alpha-D-glucose + diphosphate. It functions in the pathway glycan biosynthesis; glycogen biosynthesis. Involved in the biosynthesis of ADP-glucose, a building block required for the elongation reactions to produce glycogen. Catalyzes the reaction between ATP and alpha-D-glucose 1-phosphate (G1P) to produce pyrophosphate and ADP-Glc. In Streptococcus pneumoniae (strain CGSP14), this protein is Glucose-1-phosphate adenylyltransferase.